Here is a 313-residue protein sequence, read N- to C-terminus: Meiotically up-regulated gene 100 protein, mitochondrial (313 aa).

Transmembrane regions (helical) follow at residues 147–167 and 178–198; these read VFDY…YTAG and SGFI…TLTF.

The protein localises to the mitochondrion inner membrane. In terms of biological role, has a role in meiosis. This is Meiotically up-regulated gene 100 protein, mitochondrial (mug100) from Schizosaccharomyces pombe (strain 972 / ATCC 24843) (Fission yeast).